The following is a 720-amino-acid chain: MEFIYQFVWIVPFFPFIASILIGVNLLFFPKSTKSLREIWAIFSILLLSIAMIFSFNILWQQINDNIIYRYLWSWIFDNKIDFKIGFLIDPLTSIMLVLITTVGVLVMIYSDSYMSYDQGYVRFFAYLSLFTASMLGLVLSPNLIQIYIFWELVGMCSYLLIGFWFTRPSAANACQKAFVTNRIGDFGLLLGILGFYWITGSFEFEILFKRFNDLVINHEVNLYFANFCALLLFLGPIAKSAQFPLHIWLPDAMEGPTPISALIHAATMVAAGIFLVARWFPLFQLLPFVMTIISWVGAITAFLGATIALAQTDLKKGLAYSTMSQLGYMMLALGIGSYQAGLFHLITHAYSKALLFLGSGSVIHSVESIVGYSPNKCQNMAFMGGLRKYMPITGITFLLGTFSLCGIPPFACFWSKDEIITDSWLYSSTLGSISLVTAGLTAFYMFRIYFLTFEGDLRVNLNKVAFTYPVSIWGELNLNKKNSNKNKFVLNKYDIFFETDQNENQTDNLSFFSDIKKLKYPKESDNKMLFPLLVLTLPTLFIGFLGAPFPEGQIGSDLLSQWLYPVFKSAEEITSGNWLEFGLNAINSLSVVFSGIFIAFILYGPFSLFPQNLEKNIEFSLEKNLNSFFSFIYNWSYFRGYIDVYYNIVFVKGTRLLAQSLSFFDEWIIDGFVNGFGILTFFEGESIKYLEGGRISFYLFGLIFGMIILLFIGFFGAMF.

Helical transmembrane passes span 9-29 (WIVP…LLFF), 39-59 (IWAI…FNIL), 87-107 (FLID…GVLV), 125-145 (FAYL…PNLI), 147-167 (IYIF…FWFT), 189-209 (LLLG…EILF), 221-239 (VNLY…GPIA), 258-278 (TPIS…FLVA), 286-306 (LLPF…FLGA), 327-347 (LGYM…FHLI), 354-374 (ALLF…VGYS), 395-415 (GITF…ACFW), 434-454 (ISLV…FLTF), 530-550 (LFPL…GAPF), 590-610 (LSVV…FSLF), and 700-720 (LFGL…GAMF).

Belongs to the complex I subunit 5 family. NDH is composed of at least 16 different subunits, 5 of which are encoded in the nucleus.

The protein localises to the plastid. The protein resides in the chloroplast thylakoid membrane. It carries out the reaction a plastoquinone + NADH + (n+1) H(+)(in) = a plastoquinol + NAD(+) + n H(+)(out). The enzyme catalyses a plastoquinone + NADPH + (n+1) H(+)(in) = a plastoquinol + NADP(+) + n H(+)(out). Its function is as follows. NDH shuttles electrons from NAD(P)H:plastoquinone, via FMN and iron-sulfur (Fe-S) centers, to quinones in the photosynthetic chain and possibly in a chloroplast respiratory chain. The immediate electron acceptor for the enzyme in this species is believed to be plastoquinone. Couples the redox reaction to proton translocation, and thus conserves the redox energy in a proton gradient. This chain is NAD(P)H-quinone oxidoreductase subunit 5, chloroplastic (ndhF), found in Physcomitrium patens (Spreading-leaved earth moss).